A 590-amino-acid polypeptide reads, in one-letter code: Type I inositol polyphosphate 5-phosphatase 1 (590 aa).

The interval 47–73 (DYSADSDDDYEDRSQEFDPISSGVTNP) is disordered. The span at 48 to 57 (YSADSDDDYE) shows a compositional bias: acidic residues. The residue at position 60 (Ser60) is a Phosphoserine. Catalytic stretches follow at residues 445-460 (ERII…INLS) and 523-538 (GKRR…WNGK).

This sequence belongs to the inositol polyphosphate 5-phosphatase family. Expressed ubiquitously.

It carries out the reaction 1D-myo-inositol 1,4,5-trisphosphate + H2O = 1D-myo-inositol 1,4-bisphosphate + phosphate. The enzyme catalyses 1D-myo-inositol 1,3,4,5-tetrakisphosphate + H2O = 1D-myo-inositol 1,3,4-trisphosphate + phosphate. Functionally, has phosphatase activity toward Ins(1,4,5)P3 and Ins(1,3,4,5)P4, but not toward Ins(1,4)P2, Ins(1)P. Seems to be involved in the abscisic acid (ABA) signaling pathway. Could also be able to hydrolyze PtdIns(4,5)P2 and PtdIns(3,4,5)P3. The protein is Type I inositol polyphosphate 5-phosphatase 1 of Arabidopsis thaliana (Mouse-ear cress).